The following is a 374-amino-acid chain: uncharacterized protein (374 aa).

This sequence belongs to the mimivirus R640 family.

It is found in the virion. This is an uncharacterized protein from Acanthamoeba polyphaga (Amoeba).